A 117-amino-acid chain; its full sequence is Large ribosomal subunit protein uL18 (117 aa).

The protein belongs to the universal ribosomal protein uL18 family. Part of the 50S ribosomal subunit; part of the 5S rRNA/L5/L18/L25 subcomplex. Contacts the 5S and 23S rRNAs.

Functionally, this is one of the proteins that bind and probably mediate the attachment of the 5S RNA into the large ribosomal subunit, where it forms part of the central protuberance. In Blochmanniella floridana, this protein is Large ribosomal subunit protein uL18.